A 222-amino-acid polypeptide reads, in one-letter code: uncharacterized protein (222 aa).

Helical transmembrane passes span 26-46 (YGLL…SQQM), 48-68 (LPYP…FLTV), 75-95 (WGLV…GPIL), 107-127 (VITS…AYVL), 139-159 (FITA…FFQI), 166-186 (ISAG…SAII), and 198-218 (ISLY…FGIA).

Belongs to the BI1 family.

The protein resides in the cell membrane. This is an uncharacterized protein from Pseudomonas aeruginosa (strain ATCC 15692 / DSM 22644 / CIP 104116 / JCM 14847 / LMG 12228 / 1C / PRS 101 / PAO1).